We begin with the raw amino-acid sequence, 660 residues long: Bifunctional polymyxin resistance protein ArnA (660 aa).

Residues 1–304 are formyltransferase ArnAFT; it reads MKAIVFAYHD…EMGIVTDVRL (304 aa). His-104 serves as the catalytic Proton donor; for formyltransferase activity. (6R)-10-formyltetrahydrofolate-binding positions include Arg-114 and 136-140; that span reads VKRPD. A dehydrogenase ArnADH region spans residues 314–660; it reads RRTRVLILGV…RTTVQEGDGA (347 aa). NAD(+) contacts are provided by residues Asp-347 and 368-369; that span reads DI. Residues Ala-393, Tyr-398, and 432–433 each bind UDP-alpha-D-glucuronate; that span reads TS. Residue Glu-434 is the Proton acceptor; for decarboxylase activity of the active site. UDP-alpha-D-glucuronate is bound by residues Arg-460, Asn-492, 526-535, and Tyr-613; that span reads KLMDGGAQKR. The active-site Proton donor; for decarboxylase activity is the Arg-619.

The protein in the N-terminal section; belongs to the Fmt family. UDP-L-Ara4N formyltransferase subfamily. In the C-terminal section; belongs to the NAD(P)-dependent epimerase/dehydratase family. UDP-glucuronic acid decarboxylase subfamily. Homohexamer, formed by a dimer of trimers.

It carries out the reaction UDP-alpha-D-glucuronate + NAD(+) = UDP-beta-L-threo-pentopyranos-4-ulose + CO2 + NADH. The catalysed reaction is UDP-4-amino-4-deoxy-beta-L-arabinose + (6R)-10-formyltetrahydrofolate = UDP-4-deoxy-4-formamido-beta-L-arabinose + (6S)-5,6,7,8-tetrahydrofolate + H(+). Its pathway is nucleotide-sugar biosynthesis; UDP-4-deoxy-4-formamido-beta-L-arabinose biosynthesis; UDP-4-deoxy-4-formamido-beta-L-arabinose from UDP-alpha-D-glucuronate: step 1/3. The protein operates within nucleotide-sugar biosynthesis; UDP-4-deoxy-4-formamido-beta-L-arabinose biosynthesis; UDP-4-deoxy-4-formamido-beta-L-arabinose from UDP-alpha-D-glucuronate: step 3/3. It functions in the pathway bacterial outer membrane biogenesis; lipopolysaccharide biosynthesis. Its function is as follows. Bifunctional enzyme that catalyzes the oxidative decarboxylation of UDP-glucuronic acid (UDP-GlcUA) to UDP-4-keto-arabinose (UDP-Ara4O) and the addition of a formyl group to UDP-4-amino-4-deoxy-L-arabinose (UDP-L-Ara4N) to form UDP-L-4-formamido-arabinose (UDP-L-Ara4FN). The modified arabinose is attached to lipid A and is required for resistance to polymyxin and cationic antimicrobial peptides. The chain is Bifunctional polymyxin resistance protein ArnA from Serratia proteamaculans (strain 568).